The sequence spans 74 residues: Cytochrome c oxidase copper chaperone 1 (74 aa).

The segment at 1 to 30 (MTDQPAQNGLIPPPTSEPSKAAASAETKPK) is disordered. Cu cation is bound by residues Cys34 and Cys35. The CHCH domain maps to 34 to 74 (CCACPDTKKLRDECIVEHGESACTKWIEAHKICLRAEGFNV). 2 short sequence motifs (cx9C motif) span residues 37-47 (CPDTKKLRDEC) and 56-66 (CTKWIEAHKIC). Disulfide bonds link Cys37–Cys66 and Cys47–Cys56.

This sequence belongs to the COX17 family.

It localises to the mitochondrion intermembrane space. In terms of biological role, copper chaperone for cytochrome c oxidase (COX). Binds 2 copper ions and delivers them to the Cu(A) site of COX. Can complement the yeast mutant cox17. The chain is Cytochrome c oxidase copper chaperone 1 (COX17-1) from Arabidopsis thaliana (Mouse-ear cress).